Here is an 839-residue protein sequence, read N- to C-terminus: ATP-binding cassette sub-family F member 1 (839 aa).

The disordered stretch occupies residues 1–258 (MPKGPKQQPP…KKEKKKLKKQ (258 aa)). Serine 22 carries the phosphoserine modification. Basic residues predominate over residues 29–39 (KKGKKDKKTKK). Residues 47-64 (VEDKQAGEEEKLQKEKEQ) show a composition bias toward basic and acidic residues. Over residues 71 to 83 (QKKKRDTRKGRRK) the composition is skewed to basic residues. Serine 105, serine 109, and serine 140 each carry phosphoserine. Acidic residues predominate over residues 136–149 (IQDESEEEKEEEEE). Residues 150-162 (KPVLKPAKPEKNR) are compositionally biased toward basic and acidic residues. Threonine 195 carries the phosphothreonine modification. Serine 197 carries the post-translational modification Phosphoserine. Residues 206 to 223 (TKEKEPPRPGKDKDKKGA) show a composition bias toward basic and acidic residues. At serine 227 the chain carries Phosphoserine. Positions 247 to 256 (LSKKEKKKLK) are enriched in basic residues. One can recognise an ABC transporter 1 domain in the interval 298–542 (IKLEKFSISA…MYQQKQKELL (245 aa)). Residue 330-337 (GPNGKGKT) participates in ATP binding. Basic and acidic residues predominate over residues 553-574 (KELKAGGKSTKQAEKQTKEVLT). Residues 553 to 600 (KELKAGGKSTKQAEKQTKEVLTRKQQKCRRKNQDEESQDPPELLKRPR) form a disordered region. Serine 589 bears the Phosphoserine mark. In terms of domain architecture, ABC transporter 2 spans 619 to 834 (LGLHGVTFGY…VLEALGEVMV (216 aa)). 652-659 (GPNGVGKS) contributes to the ATP binding site.

In terms of assembly, interacts (via N-terminus) with EIF2S1; the interaction is independent of its phosphorylated status. Associates (via both ABC transporter domains) with the ribosomes. In terms of processing, phosphorylated at phosphoserine and phosphothreonine. Phosphorylation on Ser-109 and Ser-140 by CK2; inhibits association of EIF2 with ribosomes.

It is found in the cytoplasm. The protein localises to the nucleus. The protein resides in the nucleoplasm. It localises to the nucleus envelope. Required for efficient Cap- and IRES-mediated mRNA translation initiation. Not involved in the ribosome biogenesis. In Rattus norvegicus (Rat), this protein is ATP-binding cassette sub-family F member 1 (Abcf1).